Here is a 524-residue protein sequence, read N- to C-terminus: Nucleoporin NUP56 (524 aa).

The disordered stretch occupies residues 1 to 219 (MADDPHNTST…SSMAKFASST (219 aa)). 3 stretches are compositionally biased toward basic and acidic residues: residues 28 to 80 (VKED…EPEK), 114 to 168 (THDE…KEVE), and 179 to 199 (SAEKPKIEEKKDESKDTKVDK). The short motif at 37 to 44 (ARRELKQT) is the Nuclear localization signal element. The stretch at 111–133 (KKRTHDELEQDGKEEEEKKEGEK) forms a coiled coil. Residues 200–219 (PQTSSSAFANSSMAKFASST) show a composition bias toward polar residues. FG repeat units follow at residues 223–224 (FG), 226–227 (FG), 237–238 (FG), 247–248 (FG), 266–267 (FG), 312–313 (FG), and 328–329 (FG). Disordered regions lie at residues 247–284 (FGSKSADASAAPAGPPKLSFGSASAASPFASLNGQAGG) and 300–371 (GSSA…GEEK). Residues 248 to 277 (GSKSADASAAPAGPPKLSFGSASAASPFAS) show a composition bias toward low complexity. 2 stretches are compositionally biased toward acidic residues: residues 332–345 (ESDEEDEGEGEEGE) and 352–362 (GEGEEKEEEEK). The stretch at 345–376 (EENKSENGEGEEKEEEEKEEKASGEEKKKFKL) forms a coiled coil. A RanBD1 domain is found at 377–475 (QKVHIDDGEG…TPILPAMKFQ (99 aa)). The stretch at 503-524 (SQANATQFSNMVEKIKEKLAAA) forms a coiled coil.

In terms of assembly, the nuclear pore complex (NPC) constitutes the exclusive means of nucleocytoplasmic transport. NPCs allow the passive diffusion of ions and small molecules and the active, nuclear transport receptor-mediated bidirectional transport of macromolecules such as proteins, RNAs, ribonucleoparticles (RNPs), and ribosomal subunits across the nuclear envelope. The 55-60 MDa NPC is composed of at least 28 different subunits: AMO1, ELYS, GLE1, GLE2, MLP1, NDC1, NIC96, NSP1, NUP133, NUP145, NUP152, NUP159, NUP170, NUP188, NUP192, NUP37, NUP49, NUP53, NUP56, NUP57, NUP82, NUP84, NUP85, POM152, POM33, POM34, SEC13 and SEH1. Due to its 8-fold rotational symmetry, all subunits are present with 8 copies or multiples thereof.

It is found in the nucleus. Its subcellular location is the nuclear pore complex. The protein localises to the nucleus membrane. In terms of biological role, functions as a component of the nuclear pore complex (NPC). NPC components, collectively referred to as nucleoporins (NUPs), can play the role of both NPC structural components and of docking or interaction partners for transiently associated nuclear transport factors. Active directional transport is assured by both, a Phe-Gly (FG) repeat affinity gradient for these transport factors across the NPC and a transport cofactor concentration gradient across the nuclear envelope (GSP1 and GSP2 GTPases associated predominantly with GTP in the nucleus, with GDP in the cytoplasm). This chain is Nucleoporin NUP56 (NUP56), found in Chaetomium thermophilum (strain DSM 1495 / CBS 144.50 / IMI 039719) (Thermochaetoides thermophila).